A 262-amino-acid polypeptide reads, in one-letter code: Demethyldecarbamoylnovobiocin O-methyltransferase (262 aa).

Residue 64 to 65 (TM) participates in S-adenosyl-L-methionine binding. Catalysis depends on E72, which acts as the Proton acceptor. S-adenosyl-L-methionine contacts are provided by residues 92–96 (ETGVW), 122–126 (DSFQG), F178, 196–197 (DG), and S202. D196 lines the Mg(2+) pocket. D223 and D224 together coordinate Mg(2+).

The protein belongs to the methyltransferase TylF/MycF family. In terms of assembly, homodimer. Requires Mg(2+) as cofactor.

It catalyses the reaction desmethyldescarbamoylnovobiocin + S-adenosyl-L-methionine = descarbamoylnovobiocin + S-adenosyl-L-homocysteine + H(+). It participates in antibiotic biosynthesis; novobiocin biosynthesis. Its function is as follows. S-adenosyl-L-methionine-dependent O-methyltransferase that methylates at 4-OH of the noviose moiety, the penultimate step in the novobiocin biosynthesis pathway. Novobiocin is an aminocoumarin family antibiotic that targets bacterial DNA gyrases. The chain is Demethyldecarbamoylnovobiocin O-methyltransferase (novP) from Streptomyces niveus (Streptomyces spheroides).